The following is a 579-amino-acid chain: Adenine deaminase (579 aa).

This sequence belongs to the metallo-dependent hydrolases superfamily. Adenine deaminase family. It depends on Mn(2+) as a cofactor.

The catalysed reaction is adenine + H2O + H(+) = hypoxanthine + NH4(+). The protein is Adenine deaminase of Listeria innocua serovar 6a (strain ATCC BAA-680 / CLIP 11262).